The primary structure comprises 266 residues: Ras-like protein family member 12 (266 aa).

GTP contacts are provided by residues 27-34, 74-78, and 134-137; these read GRRGAGKS, DTADL, and NKLD.

Belongs to the small GTPase superfamily. Ras family.

The enzyme catalyses GTP + H2O = GDP + phosphate + H(+). The sequence is that of Ras-like protein family member 12 (RASL12) from Bos taurus (Bovine).